A 485-amino-acid polypeptide reads, in one-letter code: Cysteine--tRNA ligase (485 aa).

Cysteine 27 contacts Zn(2+). Positions 29 to 39 match the 'HIGH' region motif; the sequence is ITAYDLCHIGH. Zn(2+)-binding residues include cysteine 208, histidine 233, and glutamate 237. The 'KMSKS' region signature appears at 265-269; sequence KMSKS. Lysine 268 contributes to the ATP binding site.

The protein belongs to the class-I aminoacyl-tRNA synthetase family. Monomer. Zn(2+) is required as a cofactor.

The protein resides in the cytoplasm. The catalysed reaction is tRNA(Cys) + L-cysteine + ATP = L-cysteinyl-tRNA(Cys) + AMP + diphosphate. The protein is Cysteine--tRNA ligase of Solidesulfovibrio magneticus (strain ATCC 700980 / DSM 13731 / RS-1) (Desulfovibrio magneticus).